The chain runs to 751 residues: Leucine-rich repeat-containing protein 56 homolog (751 aa).

Positions 1–149 (MKKSTVLDAR…IDKSRDNGQL (149 aa)) are disordered. The segment covering 13 to 22 (GPLPRRPQQP) has biased composition (pro residues). Polar residues-rich tracts occupy residues 28 to 39 (RNSSQVEKNNAR) and 60 to 87 (HSQSQSLDTSFAPNTNTTLGSTDVNLNS). LRR repeat units lie at residues 210 to 235 (MPQLNSLKLNNSRITELRVLGTNYAN), 236 to 256 (LRRLWISNCLVSSVSGVGACA), 258 to 279 (VLEELYASFNSISDIDALTEVS), 280 to 304 (STLQVVDLEGNDIRDTDMLKRTLPQ), and 307 to 328 (KMKHLVLKGNPVASSETIVELS). 3 disordered regions span residues 430-538 (SRSH…QRQQ), 645-698 (TCTH…EKDW), and 717-751 (EAALKERVQGSKEVDGGGLEKVESEDEEDVSPVVF). Polar residues-rich tracts occupy residues 456–471 (KNSQSTASSGDSTNQG) and 662–671 (QQEQPTTAGA). Residues 717-738 (EAALKERVQGSKEVDGGGLEKV) show a composition bias toward basic and acidic residues. The segment covering 739 to 751 (ESEDEEDVSPVVF) has biased composition (acidic residues).

Belongs to the LRRC56 family.

Its subcellular location is the cell projection. The protein localises to the cilium. It localises to the flagellum. In terms of biological role, required for the assembly of dynein arms in the distal portion of flagellum axoneme. The sequence is that of Leucine-rich repeat-containing protein 56 homolog from Trypanosoma brucei brucei (strain 927/4 GUTat10.1).